A 140-amino-acid polypeptide reads, in one-letter code: MAKKITGYIKLQIPAGKANPSPPIGPALGQHGVNIMEFCKAFNAKTQGDEGTITPVVITVYADRSFSFITKVPPMSVLIKKAVGIESGSSVPNKNKVGTLTAEQVKEIAVKKMPDMNAASLEAAMRTVEGTARSMGVEIV.

Belongs to the universal ribosomal protein uL11 family. In terms of assembly, part of the ribosomal stalk of the 50S ribosomal subunit. Interacts with L10 and the large rRNA to form the base of the stalk. L10 forms an elongated spine to which L12 dimers bind in a sequential fashion forming a multimeric L10(L12)X complex. Post-translationally, one or more lysine residues are methylated.

Forms part of the ribosomal stalk which helps the ribosome interact with GTP-bound translation factors. This is Large ribosomal subunit protein uL11 from Geobacter metallireducens (strain ATCC 53774 / DSM 7210 / GS-15).